The following is a 143-amino-acid chain: Large ribosomal subunit protein uL15 (143 aa).

The interval 1–54 (MQLNSIKPAPGAKHPKRRVGRGIGSGLGKTAGRGHKGQKSRAGGFHKVGFEGGQ) is disordered. Residues 21–31 (RGIGSGLGKTA) show a composition bias toward gly residues.

The protein belongs to the universal ribosomal protein uL15 family. In terms of assembly, part of the 50S ribosomal subunit.

Functionally, binds to the 23S rRNA. This is Large ribosomal subunit protein uL15 from Nitrosospira multiformis (strain ATCC 25196 / NCIMB 11849 / C 71).